Reading from the N-terminus, the 451-residue chain is tRNA(Ile)-lysidine synthase (451 aa).

21-26 (SGGLDS) provides a ligand contact to ATP.

Belongs to the tRNA(Ile)-lysidine synthase family.

It is found in the cytoplasm. The enzyme catalyses cytidine(34) in tRNA(Ile2) + L-lysine + ATP = lysidine(34) in tRNA(Ile2) + AMP + diphosphate + H(+). In terms of biological role, ligates lysine onto the cytidine present at position 34 of the AUA codon-specific tRNA(Ile) that contains the anticodon CAU, in an ATP-dependent manner. Cytidine is converted to lysidine, thus changing the amino acid specificity of the tRNA from methionine to isoleucine. The chain is tRNA(Ile)-lysidine synthase from Yersinia pseudotuberculosis serotype O:1b (strain IP 31758).